The primary structure comprises 887 residues: Autotaxin (887 aa).

The first 27 residues, 1–27 (MARQGCLGSFQVISLFTFAISVNICLG), serve as a signal peptide directing secretion. Positions 28 to 35 (FTASRIKR) are cleaved as a propeptide — removed by furin. An N-linked (GlcNAc...) asparagine glycan is attached at Asn53. SMB domains follow at residues 54–97 (TSGS…LKTA) and 98–142 (RGWE…GESH). 10 disulfide bridges follow: Cys58/Cys75, Cys62/Cys93, Cys73/Cys86, Cys79/Cys85, Cys102/Cys119, Cys107/Cys137, Cys117/Cys130, Cys123/Cys129, Cys148/Cys194, and Cys156/Cys350. The short motif at 126–128 (RGD) is the Cell attachment site element. A phosphodiesterase region spans residues 144–501 (VDDDCEEIKV…PTFKYRTKVP (358 aa)). Asp171 and Thr209 together coordinate Zn(2+). Thr209 functions as the Nucleophile in the catalytic mechanism. Residues Thr209, Asn230, and Asp311 each coordinate 1-(9Z-octadecenoyl)-sn-glycero-3-phosphate. Thr209, Asn230, and Asp311 together coordinate 1-hexadecanoyl-sn-glycero-3-phosphate. Residues Thr209, Asn230, and Asp311 each coordinate 1-tetradecanoyl-sn-glycerol 3-phosphate. Zn(2+) contacts are provided by Asp311, His315, Asp358, and His359. 5 cysteine pairs are disulfide-bonded: Cys366–Cys468, Cys413–Cys830, Cys566–Cys691, Cys568–Cys676, and Cys799–Cys809. Asn398 and Asn410 each carry an N-linked (GlcNAc...) asparagine glycan. His474 is a binding site for Zn(2+). 1-(9Z-octadecenoyl)-sn-glycero-3-phosphate is bound at residue His474. His474 provides a ligand contact to 1-hexadecanoyl-sn-glycero-3-phosphate. His474 contributes to the 1-tetradecanoyl-sn-glycerol 3-phosphate binding site. A glycan (N-linked (GlcNAc...) asparagine) is linked at Asn524. Positions 586–607 (HTKGSTEAETGKFRGSKHENKK) are enriched in basic and acidic residues. The tract at residues 586–615 (HTKGSTEAETGKFRGSKHENKKNLNGSVEP) is disordered. Asn610 carries N-linked (GlcNAc...) asparagine glycosylation. The nuclease-like domain stretch occupies residues 622–887 (LYGRPAVLYR…TYLHTYESEI (266 aa)). Asp764, Asn766, Asp768, Leu770, and Asp772 together coordinate Ca(2+). An N-linked (GlcNAc...) asparagine glycan is attached at Asn831. Residues 854 to 875 (IEHLTGLDFYRKTSRSYSEILT) are required for secretion.

This sequence belongs to the nucleotide pyrophosphatase/phosphodiesterase family. Requires Zn(2+) as cofactor. The cofactor is Ca(2+). Post-translationally, N-glycosylation, but not furin-cleavage, plays a critical role on secretion and on lysoPLD activity. The interdomain disulfide bond between Cys-413 and Cys-830 is essential for catalytic activity. As to expression, abundantly expressed in cerebrum and cerebellum. Localized in secretory epithelial cells in the brain and the eye including choroid plexus epithelial cells, ciliary epithelial cells, iris pigment epithelial cells, and retinal pigment cells.

It localises to the secreted. The enzyme catalyses a 1-O-alkyl-sn-glycero-3-phosphoethanolamine + H2O = a 1-O-alkyl-sn-glycero-3-phosphate + ethanolamine + H(+). It catalyses the reaction a 1-acyl-sn-glycero-3-phosphoethanolamine + H2O = a 1-acyl-sn-glycero-3-phosphate + ethanolamine + H(+). The catalysed reaction is 1-(9Z-octadecenoyl)-sn-glycero-3-phosphoethanolamine + H2O = 1-(9Z-octadecenoyl)-sn-glycero-3-phosphate + ethanolamine + H(+). It carries out the reaction a 1-O-alkyl-sn-glycero-3-phosphocholine + H2O = a 1-O-alkyl-sn-glycero-3-phosphate + choline + H(+). The enzyme catalyses 1-O-(9Z-octadecenyl)-sn-glycero-3-phosphocholine + H2O = 1-O-(9Z-octadecenyl)-sn-glycero-3-phosphate + choline + H(+). It catalyses the reaction 1-O-hexadecyl-sn-glycero-3-phosphocholine + H2O = 1-O-hexadecyl-sn-glycero-3-phosphate + choline + H(+). The catalysed reaction is a 1-O-(1Z-alkenyl)-sn-glycero-3-phosphocholine + H2O = a 1-O-(1Z-alkenyl)-sn-glycero-3-phosphate + choline + H(+). It carries out the reaction a 1-acyl-sn-glycero-3-phosphocholine + H2O = a 1-acyl-sn-glycero-3-phosphate + choline + H(+). The enzyme catalyses 1-dodecanoyl-sn-glycero-3-phosphocholine + H2O = 1-dodecanoyl-sn-glycerol 3-phosphate + choline + H(+). It catalyses the reaction 1-(9Z-octadecenoyl)-sn-glycero-3-phosphocholine + H2O = 1-(9Z-octadecenoyl)-sn-glycero-3-phosphate + choline + H(+). The catalysed reaction is 1-tetradecanoyl-sn-glycero-3-phosphocholine + H2O = 1-tetradecanoyl-sn-glycerol 3-phosphate + choline + H(+). It carries out the reaction 1-decanoyl-sn-glycero-3-phosphocholine + H2O = 1-decanoyl-sn-glycero-3-phosphate + choline + H(+). The enzyme catalyses 1-octadecanoyl-sn-glycero-3-phosphocholine + H2O = 1-octadecanoyl-sn-glycero-3-phosphate + choline + H(+). It catalyses the reaction 1-hexadecanoyl-sn-glycero-3-phosphocholine + H2O = 1-hexadecanoyl-sn-glycero-3-phosphate + choline + H(+). The catalysed reaction is 1-hexanoyl-sn-glycero-3-phosphocholine + H2O = 1-hexanoyl-sn-glycero-3-phosphate + choline + H(+). It carries out the reaction 1-(9Z,12Z)-octadecadienoyl-sn-glycero-3-phosphocholine + H2O = 1-(9Z,12Z)-octadecadienoyl-sn-glycero-3-phosphate + choline + H(+). The enzyme catalyses sphing-4-enine-phosphocholine + H2O = sphing-4-enine 1-phosphate + choline + H(+). It catalyses the reaction 1-(5Z,8Z,11Z,14Z-eicosatetraenoyl)-sn-glycero-3-phosphocholine + H2O = 1-(5Z,8Z,11Z,14Z-eicosatetraenoyl)-sn-glycero-3-phosphate + choline + H(+). The catalysed reaction is a 2-acyl-sn-glycero-3-phosphocholine + H2O = a 2-acyl-sn-glycerol 3-phosphate + choline + H(+). It carries out the reaction a 1,2-diacyl-sn-glycero-3-phosphocholine + H2O = a 1,2-diacyl-sn-glycero-3-phosphate + choline + H(+). The enzyme catalyses 1,2-dioctanoyl-sn-glycero-3-phosphocholine + H2O = 1,2-dioctanoyl-sn-glycero-3-phosphate + choline + H(+). It catalyses the reaction 1,2-didecanoyl-sn-glycero-3-phosphocholine + H2O = 1,2-didecanoyl-sn-glycero-3-phosphate + choline + H(+). The catalysed reaction is a 1-acyl-sn-glycero-3-phospho-L-serine + H2O = a 1-acyl-sn-glycero-3-phosphate + L-serine + H(+). It carries out the reaction 1-(9Z-octadecenoyl)-sn-glycero-3-phospho-L-serine + H2O = 1-(9Z-octadecenoyl)-sn-glycero-3-phosphate + L-serine + H(+). The enzyme catalyses a 2-acyl-sn-glycero-3-phospho-L-serine + H2O = a 2-acyl-sn-glycerol 3-phosphate + L-serine + H(+). Its activity is regulated as follows. Inhibited by vanadate. Inhibited by micromolar levels of bile salts, such as tauroursodeoxycholate. Not inhibited by taurodeoxycholate. Not inhibited by hydroxysterols, such as 7-hydroxycholesterol, testosterone, dexamethasone and prednisolone. Inhibited by EDTA and EGTA. Its function is as follows. Secreted lysophospholipase D that hydrolyzes lysophospholipids to produce the signaling molecule lysophosphatidic acid (LPA) in extracellular fluids. Its major substrate is lysophosphatidylcholine. Can also act on sphingosylphosphorylcholine producing sphingosine-1-phosphate, a modulator of cell motility. Can hydrolyze, in vitro, bis-pNPP, to some extent pNP-TMP, and barely ATP. Involved in several motility-related processes such as angiogenesis and neurite outgrowth. Acts as an angiogenic factor by stimulating migration of smooth muscle cells and microtubule formation. Stimulates migration of melanoma cells, probably via a pertussis toxin-sensitive G protein. May have a role in induction of parturition. Possible involvement in cell proliferation and adipose tissue development. Required for LPA production in activated platelets, cleaves the sn-1 lysophospholipids to generate sn-1 lysophosphatidic acids containing predominantly 18:2 and 20:4 fatty acids. Shows a preference for the sn-1 to the sn-2 isomer of 1-O-alkyl-sn-glycero-3-phosphocholine (lyso-PAF). The chain is Autotaxin from Rattus norvegicus (Rat).